The primary structure comprises 57 residues: Phylloseptin-Az4 (57 aa).

A signal peptide spans 1-13 (LVLFLGLVSLSIC). A propeptide spanning residues 14–35 (EEEKRETEEEENDQEEDDKSEE) is cleaved from the precursor. The interval 16–35 (EKRETEEEENDQEEDDKSEE) is disordered. The span at 21-32 (EEEENDQEEDDK) shows a compositional bias: acidic residues. The residue at position 56 (Leu56) is a Leucine amide.

In terms of tissue distribution, expressed by the skin glands.

It localises to the secreted. In terms of biological role, has antibacterial activity against the Gram-positive bacterium M.luteus ATCC 49732 (MIC=1.3 uM). Does not inhibit the growth of the fungus C.albicans. The polypeptide is Phylloseptin-Az4 (psn12) (Pithecopus azureus (Orange-legged monkey tree frog)).